Here is a 420-residue protein sequence, read N- to C-terminus: ATP phosphoribosyltransferase regulatory subunit (420 aa).

Belongs to the class-II aminoacyl-tRNA synthetase family. HisZ subfamily. As to quaternary structure, heteromultimer composed of HisG and HisZ subunits.

Its subcellular location is the cytoplasm. It participates in amino-acid biosynthesis; L-histidine biosynthesis; L-histidine from 5-phospho-alpha-D-ribose 1-diphosphate: step 1/9. Required for the first step of histidine biosynthesis. May allow the feedback regulation of ATP phosphoribosyltransferase activity by histidine. The polypeptide is ATP phosphoribosyltransferase regulatory subunit (Bacillus cereus (strain AH820)).